Reading from the N-terminus, the 149-residue chain is Large ribosomal subunit protein bL9 (149 aa).

It belongs to the bacterial ribosomal protein bL9 family.

In terms of biological role, binds to the 23S rRNA. The sequence is that of Large ribosomal subunit protein bL9 from Salmonella dublin (strain CT_02021853).